The following is a 200-amino-acid chain: MALSVMCLGLALLGVLQSQAQDSTQNLIPAPSLLTVPLQPDFRSDQFRGRWYVVGLAGNAVQKKTEGSFTMYSTIYELQENNSYNVTSILVRDQDQGCRYWIRTFVPSSRAGQFTLGNMHRYPQVQSYNVQVATTDYNQFAMVFFRKTSENKQYFKITLYGRTKELSPELKERFTRFAKSLGLKDDNIIFSVPTDQCIDN.

An N-terminal signal peptide occupies residues 1 to 20 (MALSVMCLGLALLGVLQSQA). Residue glutamine 21 is modified to Pyrrolidone carboxylic acid. 72–74 (YST) provides a ligand contact to a carboxymycobactin. N-linked (GlcNAc...) asparagine glycans are attached at residues asparagine 81 and asparagine 85. Residues cysteine 98 and cysteine 197 are joined by a disulfide bond. Tyrosine 128 provides a ligand contact to enterobactin. 3 residues coordinate a carboxymycobactin: lysine 147, lysine 156, and tyrosine 160. Lysine 156 is a binding site for enterobactin.

It belongs to the calycin superfamily. Lipocalin family. Monomer. Homodimer; disulfide-linked. Heterodimer; disulfide-linked with MMP9. N-glycosylated. As to expression, expressed in the cortical tubules of the kidney (at protein level). Also expressed in the medullary tubules of the kidney. Detected in lung, spleen, uterus, vagina and epididymis.

Its subcellular location is the secreted. The protein resides in the cytoplasmic granule lumen. It localises to the cytoplasmic vesicle lumen. Functionally, iron-trafficking protein involved in multiple processes such as apoptosis, innate immunity and renal development. Binds iron through association with 2,3-dihydroxybenzoic acid (2,3-DHBA), a siderophore that shares structural similarities with bacterial enterobactin, and delivers or removes iron from the cell, depending on the context. Iron-bound form (holo-24p3) is internalized following binding to the SLC22A17 (24p3R) receptor, leading to release of iron and subsequent increase of intracellular iron concentration. In contrast, association of the iron-free form (apo-24p3) with the SLC22A17 (24p3R) receptor is followed by association with an intracellular siderophore, iron chelation and iron transfer to the extracellular medium, thereby reducing intracellular iron concentration. Involved in apoptosis due to interleukin-3 (IL3) deprivation: iron-loaded form increases intracellular iron concentration without promoting apoptosis, while iron-free form decreases intracellular iron levels, inducing expression of the proapoptotic protein BCL2L11/BIM, resulting in apoptosis. Involved in innate immunity; limits bacterial proliferation by sequestering iron bound to microbial siderophores, such as enterobactin. Can also bind siderophores from M.tuberculosis. This is Neutrophil gelatinase-associated lipocalin (Lcn2) from Mus musculus (Mouse).